The sequence spans 207 residues: Thiamine-phosphate synthase (207 aa).

4-amino-2-methyl-5-(diphosphooxymethyl)pyrimidine contacts are provided by residues 37–41 (QLREK) and asparagine 69. Mg(2+)-binding residues include aspartate 70 and aspartate 89. Serine 108 contacts 4-amino-2-methyl-5-(diphosphooxymethyl)pyrimidine. Residue 134 to 136 (TGS) participates in 2-[(2R,5Z)-2-carboxy-4-methylthiazol-5(2H)-ylidene]ethyl phosphate binding. Lysine 137 lines the 4-amino-2-methyl-5-(diphosphooxymethyl)pyrimidine pocket. 2-[(2R,5Z)-2-carboxy-4-methylthiazol-5(2H)-ylidene]ethyl phosphate-binding positions include glycine 165 and 185–186 (IS).

This sequence belongs to the thiamine-phosphate synthase family. Mg(2+) serves as cofactor.

It catalyses the reaction 2-[(2R,5Z)-2-carboxy-4-methylthiazol-5(2H)-ylidene]ethyl phosphate + 4-amino-2-methyl-5-(diphosphooxymethyl)pyrimidine + 2 H(+) = thiamine phosphate + CO2 + diphosphate. The catalysed reaction is 2-(2-carboxy-4-methylthiazol-5-yl)ethyl phosphate + 4-amino-2-methyl-5-(diphosphooxymethyl)pyrimidine + 2 H(+) = thiamine phosphate + CO2 + diphosphate. The enzyme catalyses 4-methyl-5-(2-phosphooxyethyl)-thiazole + 4-amino-2-methyl-5-(diphosphooxymethyl)pyrimidine + H(+) = thiamine phosphate + diphosphate. The protein operates within cofactor biosynthesis; thiamine diphosphate biosynthesis; thiamine phosphate from 4-amino-2-methyl-5-diphosphomethylpyrimidine and 4-methyl-5-(2-phosphoethyl)-thiazole: step 1/1. Functionally, condenses 4-methyl-5-(beta-hydroxyethyl)thiazole monophosphate (THZ-P) and 2-methyl-4-amino-5-hydroxymethyl pyrimidine pyrophosphate (HMP-PP) to form thiamine monophosphate (TMP). In Desulfitobacterium hafniense (strain Y51), this protein is Thiamine-phosphate synthase.